Reading from the N-terminus, the 299-residue chain is UDP-N-acetylenolpyruvoylglucosamine reductase (299 aa).

Positions 21–189 (RVGGPAQWLL…LSARFRLEPG (169 aa)) constitute an FAD-binding PCMH-type domain. The active site involves R168. Catalysis depends on S219, which acts as the Proton donor. E289 is a catalytic residue.

It belongs to the MurB family. The cofactor is FAD.

The protein resides in the cytoplasm. The enzyme catalyses UDP-N-acetyl-alpha-D-muramate + NADP(+) = UDP-N-acetyl-3-O-(1-carboxyvinyl)-alpha-D-glucosamine + NADPH + H(+). It functions in the pathway cell wall biogenesis; peptidoglycan biosynthesis. In terms of biological role, cell wall formation. This Parasynechococcus marenigrum (strain WH8102) protein is UDP-N-acetylenolpyruvoylglucosamine reductase.